A 407-amino-acid polypeptide reads, in one-letter code: MRQLLPGDTVWRNIRLATMDPQRQAPYGLVDNQALIVREGHICDIVPETQLPVSGDNIHDMQGRLVTPGLIDCHTHLVFAGNRAAEWEQRLNGASYQHISAQGGGINATVSATRACAEEPLYLLARERMMRLASEGVTLLEIKSGYGLELATEEKLLRVAAKLAAENAIDISPTLLAAHATPAEYRDDPDGYITLVCETMIPQLWQKGLFDAVDLFCESVGFNVAQSERVLQTAKALGIPVKGHVEQLSLLGGAQLLSRYQGLSADHIEYLDEAGVAAMRDGGTVGVLLPGAFYFLRERQRPPVELLRRYQVPVAVASDFNPGTSPFCSLHLAMNMACVQFGLTPEEVWAGVTRHAARALGRQATHGQIRAGYRADFVVWDAEQPVEIVYEPGRNPLYQRVYRGQIS.

The Fe(3+) site is built by His74 and His76. Zn(2+) is bound by residues His74 and His76. 4-imidazolone-5-propanoate contacts are provided by Arg83, Tyr146, and His179. N-formimidoyl-L-glutamate is bound at residue Tyr146. His244 is a binding site for Fe(3+). A Zn(2+)-binding site is contributed by His244. Gln247 is a 4-imidazolone-5-propanoate binding site. Position 319 (Asp319) interacts with Fe(3+). Asp319 is a binding site for Zn(2+). N-formimidoyl-L-glutamate contacts are provided by Asn321 and Gly323. Thr324 contacts 4-imidazolone-5-propanoate.

Belongs to the metallo-dependent hydrolases superfamily. HutI family. Zn(2+) serves as cofactor. Fe(3+) is required as a cofactor.

The protein localises to the cytoplasm. It catalyses the reaction 4-imidazolone-5-propanoate + H2O = N-formimidoyl-L-glutamate. It participates in amino-acid degradation; L-histidine degradation into L-glutamate; N-formimidoyl-L-glutamate from L-histidine: step 3/3. Functionally, catalyzes the hydrolytic cleavage of the carbon-nitrogen bond in imidazolone-5-propanoate to yield N-formimidoyl-L-glutamate. It is the third step in the universal histidine degradation pathway. The protein is Imidazolonepropionase of Salmonella agona (strain SL483).